We begin with the raw amino-acid sequence, 293 residues long: tRNA-cytidine(32) 2-sulfurtransferase (293 aa).

The PP-loop motif motif lies at serine 71–serine 76. [4Fe-4S] cluster contacts are provided by cysteine 146, cysteine 149, and cysteine 237.

This sequence belongs to the TtcA family. As to quaternary structure, homodimer. Mg(2+) serves as cofactor. The cofactor is [4Fe-4S] cluster.

It localises to the cytoplasm. It catalyses the reaction cytidine(32) in tRNA + S-sulfanyl-L-cysteinyl-[cysteine desulfurase] + AH2 + ATP = 2-thiocytidine(32) in tRNA + L-cysteinyl-[cysteine desulfurase] + A + AMP + diphosphate + H(+). The protein operates within tRNA modification. Catalyzes the ATP-dependent 2-thiolation of cytidine in position 32 of tRNA, to form 2-thiocytidine (s(2)C32). The sulfur atoms are provided by the cysteine/cysteine desulfurase (IscS) system. The chain is tRNA-cytidine(32) 2-sulfurtransferase from Sinorhizobium medicae (strain WSM419) (Ensifer medicae).